We begin with the raw amino-acid sequence, 948 residues long: MLNLLLGDPNVRKVKKYKPLVTEINLLEEDIEPLSDKDLIAKTAEFRQKLDKVSHSPAAEKELLAELLPEAFAVMREASKRVLGLRHFDVQMIGGMILHDGQIAEMKTGEGKTLVATLPSYLNALSGKGAHVVTVNDYLARRDAEWMGQVHRFLGLSVGLIQQGMSPEERRRNYNCDITYATNSELGFDYLRDNMAAVIEEVVQRPFNYAVIDEVDSILIDEARTPLIISGQVDRPSEKYMRASEVAALLQRSTNTDSEEEPDGDYEVDEKGRNVLLTDQGFINAEQLLGVSDLFDSNDPWAHYIFNAIKAKELFIKDVNYIVRGGEIVIVDEFTGRVMPGRRWSDGLHQAVESKEGVEIQPETQTLASITYQNFFLLYPKLSGMTGTAKTEELEFEKTYKLEVTVVPTNRVSRRRDQPDVVYKTEIGKWRAIAADCAELHAEGRPVLVGTTSVEKSEFLSQLLNEQGIPHNLLNAKPENVEREAEIVAQAGRRGAVTISTNMAGRGTDIILGGNADYMARLKLREYWMPQLVSFEEDGFGIAGVAGLEGGRPAAQGFGSPNGQKPRKTWKASSDIFPAELSTEAEKLLKAAVDLGVKTYGGNSLSELVAEDKIATAAEKAPTDDPVIQKLREAYQQVRKEYEAVTKQEQAEVVELGGLHVIGTERHESRRVDNQLRGRAGRQGDPGSTRFFLSLEDNLLRIFGGDRVAKLMNAFRVEEDMPIESGMLTRSLEGAQKKVETYYYDIRKQVFEYDEVMNNQRRAIYAERRRVLEGRELKEQVIQYGERTMDEIVDAHINVDLPSEEWDLEKLVNKVKQFVYLLEDLEAKQLEDLSPEAIKIFLHEQLRIAYDLKEAQIDQIQPGLMRQAERYFILQQIDTLWREHLQAMEALRESVGLRGYGQKDPLLEYKSEGYELFLEMMTAIRRNVIYSMFMFDPQPQARPQAEVV.

Residues Gln91, 109–113, and Asp509 contribute to the ATP site; that span reads GEGKT.

This sequence belongs to the SecA family. In terms of assembly, monomer and homodimer. Part of the essential Sec protein translocation apparatus which comprises SecA, SecYEG and auxiliary proteins SecDF. Other proteins may also be involved.

The protein localises to the cell inner membrane. It is found in the cellular thylakoid membrane. Its subcellular location is the cytoplasm. It catalyses the reaction ATP + H2O + cellular proteinSide 1 = ADP + phosphate + cellular proteinSide 2.. In terms of biological role, part of the Sec protein translocase complex. Interacts with the SecYEG preprotein conducting channel. Has a central role in coupling the hydrolysis of ATP to the transfer of proteins into and across the cell membrane, serving as an ATP-driven molecular motor driving the stepwise translocation of polypeptide chains across the membrane. Probably participates in protein translocation into and across both the cytoplasmic and thylakoid membranes in cyanobacterial cells. The chain is Protein translocase subunit SecA from Synechococcus elongatus (strain ATCC 33912 / PCC 7942 / FACHB-805) (Anacystis nidulans R2).